A 542-amino-acid chain; its full sequence is Putative ankyrin repeat protein FPV115 (542 aa).

ANK repeat units follow at residues 33–62, 157–186, 218–247, 251–281, 285–314, 316–345, 347–375, and 378–407; these read FRNL…DPNS, DGLL…KTNL, NDIN…DINT, KGKT…DINV, EGLT…DVKV, TTST…EFIT, DYLS…DVNS, and CIST…NINA.

The polypeptide is Putative ankyrin repeat protein FPV115 (Fowlpox virus (strain NVSL) (FPV)).